The primary structure comprises 431 residues: Glutamate--tRNA ligase 1 (431 aa).

A 'HIGH' region motif is present at residues 6-16 (PSPTGDMHIGN). The 'KMSKS' region motif lies at 235 to 239 (KMSKR). Lys-238 contributes to the ATP binding site.

Belongs to the class-I aminoacyl-tRNA synthetase family. Glutamate--tRNA ligase type 1 subfamily. Monomer.

The protein resides in the cytoplasm. It carries out the reaction tRNA(Glu) + L-glutamate + ATP = L-glutamyl-tRNA(Glu) + AMP + diphosphate. In terms of biological role, catalyzes the attachment of glutamate to tRNA(Glu) in a two-step reaction: glutamate is first activated by ATP to form Glu-AMP and then transferred to the acceptor end of tRNA(Glu). This Campylobacter jejuni subsp. jejuni serotype O:2 (strain ATCC 700819 / NCTC 11168) protein is Glutamate--tRNA ligase 1.